A 323-amino-acid polypeptide reads, in one-letter code: MSDIVVDDFSEKQAARLNKLSKRLHREVGKAIADYQMIEEGDRIMCCLSGGKDSYAMLDILLNLQKRAPISFEIVAVNLDQKQPGFPEHILPAYLDNLGVAYHILEKDTYSIVKEKIPEGKTTCSLCSRLRRGTLYGFAQRIGATKIALGHHRDDIIETLFLNMFFAGKMKAMPPKLLSDDGANMVIRPLAYCREKDIAEYAKFKEFPIIPCNLCGSQENLKRGAVKDMLKQWDKHHPGRIESIFTAMQNTSPSQGVDREQFDFAGLTRDPDAPMRGDVAESDLPAFDFLDTSNSGHIDLDAAKARSDLLSQQRIDIVSSYKP.

A PP-loop motif motif is present at residues 49 to 54 (SGGKDS). Residues cysteine 124, cysteine 127, and cysteine 215 each contribute to the [4Fe-4S] cluster site.

It belongs to the TtcA family. Homodimer. It depends on Mg(2+) as a cofactor. [4Fe-4S] cluster is required as a cofactor.

The protein resides in the cytoplasm. The catalysed reaction is cytidine(32) in tRNA + S-sulfanyl-L-cysteinyl-[cysteine desulfurase] + AH2 + ATP = 2-thiocytidine(32) in tRNA + L-cysteinyl-[cysteine desulfurase] + A + AMP + diphosphate + H(+). Its pathway is tRNA modification. Catalyzes the ATP-dependent 2-thiolation of cytidine in position 32 of tRNA, to form 2-thiocytidine (s(2)C32). The sulfur atoms are provided by the cysteine/cysteine desulfurase (IscS) system. The polypeptide is tRNA-cytidine(32) 2-sulfurtransferase (Shewanella denitrificans (strain OS217 / ATCC BAA-1090 / DSM 15013)).